The primary structure comprises 317 residues: o-succinylbenzoate synthase (317 aa).

2-succinylbenzoate-binding positions include 71-73 and Lys-95; that span reads NAT. Residue Lys-97 is the Proton donor of the active site. Mg(2+) contacts are provided by Asp-128, Glu-154, and Asp-177. 128-130 is a binding site for 2-succinylbenzoate; it reads DVN. Residue Lys-201 participates in 2-succinylbenzoate binding. Lys-201 acts as the Proton acceptor in catalysis.

It belongs to the mandelate racemase/muconate lactonizing enzyme family. MenC type 1 subfamily. Monomer. A divalent metal cation serves as cofactor.

The enzyme catalyses (1R,6R)-6-hydroxy-2-succinyl-cyclohexa-2,4-diene-1-carboxylate = 2-succinylbenzoate + H2O. Its pathway is quinol/quinone metabolism; 1,4-dihydroxy-2-naphthoate biosynthesis; 1,4-dihydroxy-2-naphthoate from chorismate: step 4/7. It participates in quinol/quinone metabolism; menaquinone biosynthesis. Its function is as follows. Converts 2-succinyl-6-hydroxy-2,4-cyclohexadiene-1-carboxylate (SHCHC) to 2-succinylbenzoate (OSB). Does not show N-succinylamino acid racemase (NSAR) activity with N-succinyl-L-phenylglycine as substrate. This is o-succinylbenzoate synthase from Thermobifida fusca (strain YX).